Here is a 710-residue protein sequence, read N- to C-terminus: Early transcription factor 82 kDa subunit (710 aa).

Belongs to the poxviridae VETF large subunit family. Heterodimer of a 70 kDa and a 82 kDa subunit. Part of the early transcription complex composed of ETF, RAP94/OPG109, and the DNA-directed RNA polymerase.

The protein resides in the virion. Its function is as follows. Acts with RNA polymerase to initiate transcription from early gene promoters. Is recruited by the RPO-associated protein of 94 kDa RAP94/OPG109 to form the early transcription complex, which also contains the core RNA polymerase. ETF heterodimer binds to early gene promoters. The chain is Early transcription factor 82 kDa subunit (OPG133) from Bos taurus (Bovine).